The primary structure comprises 167 residues: Translationally-controlled tumor protein homolog (167 aa).

The region spanning 1-167 (MLIYQDVLTG…WKDGLKEIKI (167 aa)) is the TCTP domain.

This sequence belongs to the TCTP family.

The protein localises to the cytoplasm. The protein resides in the cytoskeleton. Involved in protein synthesis. Involved in microtubule stabilization. The polypeptide is Translationally-controlled tumor protein homolog (Cryptococcus neoformans var. neoformans serotype D (strain B-3501A) (Filobasidiella neoformans)).